A 252-amino-acid polypeptide reads, in one-letter code: 3-deoxy-manno-octulosonate cytidylyltransferase (252 aa).

Belongs to the KdsB family.

The protein resides in the cytoplasm. The enzyme catalyses 3-deoxy-alpha-D-manno-oct-2-ulosonate + CTP = CMP-3-deoxy-beta-D-manno-octulosonate + diphosphate. It functions in the pathway nucleotide-sugar biosynthesis; CMP-3-deoxy-D-manno-octulosonate biosynthesis; CMP-3-deoxy-D-manno-octulosonate from 3-deoxy-D-manno-octulosonate and CTP: step 1/1. Its pathway is bacterial outer membrane biogenesis; lipopolysaccharide biosynthesis. In terms of biological role, activates KDO (a required 8-carbon sugar) for incorporation into bacterial lipopolysaccharide in Gram-negative bacteria. The sequence is that of 3-deoxy-manno-octulosonate cytidylyltransferase from Vibrio campbellii (strain ATCC BAA-1116).